The sequence spans 917 residues: Glutamate receptor (917 aa).

The first 19 residues, 1–19 (MDTCVFPLVVLWISMRITS), serve as a signal peptide directing secretion. Over 20-556 (TLDEVPIGGI…HFFSFMEPLS (537 aa)) the chain is Extracellular. 12 N-linked (GlcNAc...) asparagine glycosylation sites follow: Asn62, Asn95, Asn121, Asn125, Asn229, Asn251, Asn261, Asn272, Asn418, Asn419, Asn424, and Asn491. Residues 557–577 (SEIWMCIVFAYIGVSVVLFLV) traverse the membrane as a helical segment. Over 578–631 (SRFSPNEWHLSEAHHSYIANDFSISNSLWFSLGAFMQQGCDISPRSMSGRIVGS) the chain is Cytoplasmic. Residues 632–652 (VWWFFTLIIISSYTANLAAFL) traverse the membrane as a helical segment. Topologically, residues 653–818 (TVERMLTPID…GAQSALTLAN (166 aa)) are extracellular. An N-linked (GlcNAc...) asparagine glycan is attached at Asn775. A helical membrane pass occupies residues 819–839 (VAGIFYILIGGLVVAVLSAAF). Topologically, residues 840 to 917 (EFLYKSRMDS…FEDSNTHTEV (78 aa)) are cytoplasmic. The tract at residues 871 to 896 (HIDSEQKTTGNGTRRRSHNSVTYTYT) is disordered.

This sequence belongs to the glutamate-gated ion channel (TC 1.A.10.1) family.

Its subcellular location is the cell membrane. The protein resides in the postsynaptic cell membrane. Receptor for glutamate. L-glutamate acts as an excitatory neurotransmitter at many synapses in the central nervous system. The postsynaptic actions of Glu are mediated by a variety of receptors. The sequence is that of Glutamate receptor from Lymnaea stagnalis (Great pond snail).